The primary structure comprises 54 residues: Large ribosomal subunit protein bL33 (54 aa).

It belongs to the bacterial ribosomal protein bL33 family.

The chain is Large ribosomal subunit protein bL33 from Corynebacterium diphtheriae (strain ATCC 700971 / NCTC 13129 / Biotype gravis).